We begin with the raw amino-acid sequence, 650 residues long: Probable potassium transport system protein Kup 1 (650 aa).

Transmembrane regions (helical) follow at residues 12 to 32 (GLLI…LYVM), 54 to 74 (ISLV…IIAL), 97 to 117 (WLVL…TLTP), 139 to 159 (VSSQ…LFSI), 170 to 190 (AFGP…LINM), 216 to 236 (AGIF…ALYS), 249 to 269 (SWPF…VWIL), 295 to 315 (LAAI…LITG), 344 to 364 (IYIP…VLYF), 375 to 395 (GLSI…WLAM), 400 to 420 (PVWN…FMIS), and 428 to 448 (GGYV…VWYY).

Belongs to the HAK/KUP transporter (TC 2.A.72) family.

It is found in the cell membrane. The enzyme catalyses K(+)(in) + H(+)(in) = K(+)(out) + H(+)(out). Transport of potassium into the cell. Likely operates as a K(+):H(+) symporter. The chain is Probable potassium transport system protein Kup 1 from Lactobacillus acidophilus (strain ATCC 700396 / NCK56 / N2 / NCFM).